A 399-amino-acid chain; its full sequence is tRNA-specific 2-thiouridylase MnmA (399 aa).

Residues Ala21–Ser28 and Leu47 each bind ATP. Cys115 acts as the Nucleophile in catalysis. Cys115 and Cys211 form a disulfide bridge. Gly139 serves as a coordination point for ATP. Residues Arg161–Gln163 form an interaction with tRNA region. Cys211 acts as the Cysteine persulfide intermediate in catalysis.

This sequence belongs to the MnmA/TRMU family.

Its subcellular location is the cytoplasm. The catalysed reaction is S-sulfanyl-L-cysteinyl-[protein] + uridine(34) in tRNA + AH2 + ATP = 2-thiouridine(34) in tRNA + L-cysteinyl-[protein] + A + AMP + diphosphate + H(+). Its function is as follows. Catalyzes the 2-thiolation of uridine at the wobble position (U34) of tRNA, leading to the formation of s(2)U34. In Parvibaculum lavamentivorans (strain DS-1 / DSM 13023 / NCIMB 13966), this protein is tRNA-specific 2-thiouridylase MnmA.